We begin with the raw amino-acid sequence, 469 residues long: Neuraminidase (469 aa).

Topologically, residues 1-6 (MNPNQK) are intravirion. The chain crosses the membrane as a helical span at residues 7–27 (IITIGSICMVVGIISLILQIG). An involved in apical transport and lipid raft association region spans residues 11-33 (GSICMVVGIISLILQIGNIVSIW). At 28–469 (NIVSIWISHS…GAELPFTIDK (442 aa)) the chain is on the virion surface side. A hypervariable stalk region region spans residues 36-90 (HSIQTGNQNHTGTCNQSIITYKNSTWVNQTYVNISNTNVVAGKDTTSVILAGNSS). Residues asparagine 44, asparagine 50, asparagine 58, asparagine 63, asparagine 68, and asparagine 88 are each glycosylated (N-linked (GlcNAc...) asparagine; by host). The tract at residues 91–469 (LCPIRGWAIY…GAELPFTIDK (379 aa)) is head of neuraminidase. 8 disulfides stabilise this stretch: cysteine 92-cysteine 417, cysteine 124-cysteine 129, cysteine 184-cysteine 231, cysteine 233-cysteine 238, cysteine 279-cysteine 292, cysteine 281-cysteine 290, cysteine 318-cysteine 335, and cysteine 421-cysteine 446. Residue arginine 118 coordinates substrate. A glycan (N-linked (GlcNAc...) asparagine; by host) is linked at asparagine 146. Aspartate 151 functions as the Proton donor/acceptor in the catalytic mechanism. Arginine 152 serves as a coordination point for substrate. N-linked (GlcNAc...) asparagine; by host glycosylation occurs at asparagine 235. Position 277-278 (277-278 (EE)) interacts with substrate. Residue arginine 293 coordinates substrate. Ca(2+) contacts are provided by aspartate 294, glycine 298, aspartate 324, and asparagine 344. N-linked (GlcNAc...) asparagine; by host glycosylation occurs at asparagine 365. Arginine 368 contacts substrate. Catalysis depends on tyrosine 402, which acts as the Nucleophile.

The protein belongs to the glycosyl hydrolase 34 family. In terms of assembly, homotetramer. The cofactor is Ca(2+). Post-translationally, N-glycosylated.

The protein resides in the virion membrane. The protein localises to the host apical cell membrane. The enzyme catalyses Hydrolysis of alpha-(2-&gt;3)-, alpha-(2-&gt;6)-, alpha-(2-&gt;8)- glycosidic linkages of terminal sialic acid residues in oligosaccharides, glycoproteins, glycolipids, colominic acid and synthetic substrates.. Its activity is regulated as follows. Inhibited by the neuraminidase inhibitors zanamivir (Relenza) and oseltamivir (Tamiflu). These drugs interfere with the release of progeny virus from infected cells and are effective against all influenza strains. Resistance to neuraminidase inhibitors is quite rare. In terms of biological role, catalyzes the removal of terminal sialic acid residues from viral and cellular glycoconjugates. Cleaves off the terminal sialic acids on the glycosylated HA during virus budding to facilitate virus release. Additionally helps virus spread through the circulation by further removing sialic acids from the cell surface. These cleavages prevent self-aggregation and ensure the efficient spread of the progeny virus from cell to cell. Otherwise, infection would be limited to one round of replication. Described as a receptor-destroying enzyme because it cleaves a terminal sialic acid from the cellular receptors. May facilitate viral invasion of the upper airways by cleaving the sialic acid moieties on the mucin of the airway epithelial cells. Likely to plays a role in the budding process through its association with lipid rafts during intracellular transport. May additionally display a raft-association independent effect on budding. Plays a role in the determination of host range restriction on replication and virulence. Sialidase activity in late endosome/lysosome traffic seems to enhance virus replication. This is Neuraminidase from Aves (Human).